The primary structure comprises 508 residues: ATP synthase subunit alpha (508 aa).

170 to 177 (GDRQTGKT) is an ATP binding site.

It belongs to the ATPase alpha/beta chains family. As to quaternary structure, F-type ATPases have 2 components, CF(1) - the catalytic core - and CF(0) - the membrane proton channel. CF(1) has five subunits: alpha(3), beta(3), gamma(1), delta(1), epsilon(1). CF(0) has three main subunits: a(1), b(2) and c(9-12). The alpha and beta chains form an alternating ring which encloses part of the gamma chain. CF(1) is attached to CF(0) by a central stalk formed by the gamma and epsilon chains, while a peripheral stalk is formed by the delta and b chains.

It localises to the cell inner membrane. The enzyme catalyses ATP + H2O + 4 H(+)(in) = ADP + phosphate + 5 H(+)(out). Functionally, produces ATP from ADP in the presence of a proton gradient across the membrane. The alpha chain is a regulatory subunit. The chain is ATP synthase subunit alpha from Dictyoglomus turgidum (strain DSM 6724 / Z-1310).